The sequence spans 771 residues: Heat shock transcription factor (771 aa).

The disordered stretch occupies residues 1–70 (MTTNLYAIAG…GIGISKPGLS (70 aa)). Composition is skewed to low complexity over residues 11-23 (PSKPTTPTSTPSP) and 31-42 (LKSLTSLPTNPL). Positions 43–62 (NPQGTSTSNALTNQSSSTGI) are enriched in polar residues. A DNA-binding region spans residues 78 to 168 (MKVPAFLNKL…PIELWEFANP (91 aa)). Residues 183–266 (RKNNRLSNSG…PPSHTSAGPL (84 aa)) are disordered. Composition is skewed to low complexity over residues 189-199 (SNSGVGSSSSL) and 212-233 (SASAAAASGSGSGQIQQAISQG). A compositionally biased stretch (polar residues) spans 238 to 262 (NHSTSGKYLITDGTTPGSAPPSHTS). The segment at 280-333 (GIAAIRQTQASIATDLRKLQASNEALWRQAYETQEKQRKHEETIDLIVSFLERL) is involved in trimerization. Composition is skewed to basic and acidic residues over residues 350–372 (RGVGVRRDRDGREGRDSRDARFA) and 399–415 (TGEHGEIESPSSDDRLV). 3 disordered regions span residues 350–513 (RGVG…SSNA), 590–634 (QALT…GSGT), and 708–771 (SGVG…SGLK). Residues 418 to 448 (GSNSEYSIPSVKRTSSSSHPLSLGQLGSSRF) are compositionally biased toward polar residues. Composition is skewed to low complexity over residues 497-511 (LSPLSDTDPLLPSSS) and 599-620 (HNPSLLNPNPNGNASTSASASA).

Belongs to the HSF family. As to quaternary structure, homotrimer. Homotrimerization increases the affinity of HSF1 to DNA. Interacts with transcriptional coregulator SSA1 on chromatin. Phosphorylated at high temperature.

The protein resides in the nucleus. In terms of biological role, DNA-binding transcription factor that specifically binds heat shock promoter elements (HSE) and activates transcription. Promotes thermotolerance by transiently regulating a subset of genes. Induces expression of STI, SSA1, SSA2, HSP78 and KAR2 during the heat response. The protein is Heat shock transcription factor of Cryptococcus neoformans var. grubii serotype A (strain H99 / ATCC 208821 / CBS 10515 / FGSC 9487) (Filobasidiella neoformans var. grubii).